The primary structure comprises 129 residues: Small ribosomal subunit protein uS11 (129 aa).

This sequence belongs to the universal ribosomal protein uS11 family. In terms of assembly, part of the 30S ribosomal subunit. Interacts with proteins S7 and S18. Binds to IF-3.

Functionally, located on the platform of the 30S subunit, it bridges several disparate RNA helices of the 16S rRNA. Forms part of the Shine-Dalgarno cleft in the 70S ribosome. This is Small ribosomal subunit protein uS11 from Stenotrophomonas maltophilia (strain R551-3).